We begin with the raw amino-acid sequence, 136 residues long: Nucleoside diphosphate kinase (136 aa).

ATP is bound by residues Lys10, Phe58, Arg86, Thr92, Arg104, and Asn114. His117 acts as the Pros-phosphohistidine intermediate in catalysis.

This sequence belongs to the NDK family. Homotetramer. The cofactor is Mg(2+).

The protein localises to the cytoplasm. The catalysed reaction is a 2'-deoxyribonucleoside 5'-diphosphate + ATP = a 2'-deoxyribonucleoside 5'-triphosphate + ADP. It carries out the reaction a ribonucleoside 5'-diphosphate + ATP = a ribonucleoside 5'-triphosphate + ADP. Its function is as follows. Major role in the synthesis of nucleoside triphosphates other than ATP. The ATP gamma phosphate is transferred to the NDP beta phosphate via a ping-pong mechanism, using a phosphorylated active-site intermediate. The polypeptide is Nucleoside diphosphate kinase (Mycolicibacterium paratuberculosis (strain ATCC BAA-968 / K-10) (Mycobacterium paratuberculosis)).